The chain runs to 470 residues: Light-independent protochlorophyllide reductase subunit N (470 aa).

[4Fe-4S] cluster is bound by residues cysteine 24, cysteine 49, and cysteine 109.

It belongs to the BchN/ChlN family. Protochlorophyllide reductase is composed of three subunits; ChlL, ChlN and ChlB. Forms a heterotetramer of two ChlB and two ChlN subunits. The cofactor is [4Fe-4S] cluster.

The enzyme catalyses chlorophyllide a + oxidized 2[4Fe-4S]-[ferredoxin] + 2 ADP + 2 phosphate = protochlorophyllide a + reduced 2[4Fe-4S]-[ferredoxin] + 2 ATP + 2 H2O. It participates in porphyrin-containing compound metabolism; chlorophyll biosynthesis (light-independent). In terms of biological role, component of the dark-operative protochlorophyllide reductase (DPOR) that uses Mg-ATP and reduced ferredoxin to reduce ring D of protochlorophyllide (Pchlide) to form chlorophyllide a (Chlide). This reaction is light-independent. The NB-protein (ChlN-ChlB) is the catalytic component of the complex. This is Light-independent protochlorophyllide reductase subunit N from Acaryochloris marina (strain MBIC 11017).